The following is a 130-amino-acid chain: Glycine cleavage system H protein (130 aa).

The Lipoyl-binding domain occupies 24–106; the sequence is IYSVGITEHA…YADGWLFRIR (83 aa). Lys65 carries the post-translational modification N6-lipoyllysine.

The protein belongs to the GcvH family. The glycine cleavage system is composed of four proteins: P, T, L and H. It depends on (R)-lipoate as a cofactor.

Its function is as follows. The glycine cleavage system catalyzes the degradation of glycine. The H protein shuttles the methylamine group of glycine from the P protein to the T protein. The sequence is that of Glycine cleavage system H protein from Pectobacterium carotovorum subsp. carotovorum (strain PC1).